Reading from the N-terminus, the 332-residue chain is Torsin-1A (332 aa).

The first 20 residues, Met-1–Ala-20, serve as a signal peptide directing secretion. The interaction with SNAPIN stretch occupies residues Lys-91 to Gly-251. Gly-102–Asn-109 contributes to the ATP binding site. 2 N-linked (GlcNAc...) (high mannose) asparagine glycosylation sites follow: Asn-143 and Asn-158. The interval Gly-251 to Asp-332 is interaction with KLC1. The segment at Arg-312–Asp-332 is interaction with SYNE3.

The protein belongs to the ClpA/ClpB family. Torsin subfamily. In terms of assembly, homohexamer. Interacts with TOR1B; the interaction may be specific of neural tissues. Interacts (ATP-bound) with TOR1AIP1 and TOR1AIP2; the interactions induce ATPase activity. Interacts with KLHL14; preferentially when ATP-free. Interacts with KLC1 (via TPR repeats); the interaction associates TOR1A with the kinesin oligomeric complex. Interacts with COPS4; the interaction associates TOR1A with the CSN complex. Interacts with SNAPIN; the interaction is direct and associates SNAPIN with the CSN complex. Interacts with STON2. Interacts (ATP-bound) with SYNE3 (via KASH domain); the interaction is required for SYNE3 nuclear envelope localization. Interacts with VIM; the interaction associates TOR1A with the cytoskeleton. Interacts with PLEC. Interacts (ATP-bound) with SLC6A3; regulates SLC6A3 transport to the plasma membrane. N-glycosylated. Widely expressed. Highest levels in kidney and liver. In the brain, high levels found in the dopaminergic neurons of the substantia nigra pars compacta, as well as in the neocortex, hippocampus and cerebellum. Also highly expressed in the spinal cord.

The protein resides in the endoplasmic reticulum lumen. It localises to the nucleus membrane. Its subcellular location is the cell projection. The protein localises to the growth cone. It is found in the cytoplasmic vesicle membrane. The protein resides in the cytoplasmic vesicle. It localises to the secretory vesicle. Its subcellular location is the synaptic vesicle. The protein localises to the cytoplasm. It is found in the cytoskeleton. It catalyses the reaction ATP + H2O = ADP + phosphate + H(+). In terms of biological role, protein with chaperone functions important for the control of protein folding, processing, stability and localization as well as for the reduction of misfolded protein aggregates. Involved in the regulation of synaptic vesicle recycling, controls STON2 protein stability in collaboration with the COP9 signalosome complex (CSN). In the nucleus, may link the cytoskeleton with the nuclear envelope, this mechanism seems to be crucial for the control of nuclear polarity, cell movement and, specifically in neurons, nuclear envelope integrity. Participates in the cellular trafficking and may regulate the subcellular location of multipass membrane proteins such as the dopamine transporter SLC6A3, leading to the modulation of dopamine neurotransmission. In the endoplasmic reticulum, plays a role in the quality control of protein folding by increasing clearance of misfolded proteins such as SGCE variants or holding them in an intermediate state for proper refolding. May have a redundant function with TOR1B in non-neural tissues. In Homo sapiens (Human), this protein is Torsin-1A (TOR1A).